A 338-amino-acid polypeptide reads, in one-letter code: Tetraacyldisaccharide 4'-kinase (338 aa).

Residue 67 to 74 (IAGGAGKT) participates in ATP binding.

The protein belongs to the LpxK family.

It catalyses the reaction a lipid A disaccharide + ATP = a lipid IVA + ADP + H(+). The protein operates within glycolipid biosynthesis; lipid IV(A) biosynthesis; lipid IV(A) from (3R)-3-hydroxytetradecanoyl-[acyl-carrier-protein] and UDP-N-acetyl-alpha-D-glucosamine: step 6/6. In terms of biological role, transfers the gamma-phosphate of ATP to the 4'-position of a tetraacyldisaccharide 1-phosphate intermediate (termed DS-1-P) to form tetraacyldisaccharide 1,4'-bis-phosphate (lipid IVA). The chain is Tetraacyldisaccharide 4'-kinase from Acidovorax ebreus (strain TPSY) (Diaphorobacter sp. (strain TPSY)).